Consider the following 870-residue polypeptide: H(+)/Cl(-) exchange transporter 6 (870 aa).

Residues M1–K80 are Cytoplasmic-facing. 2 consecutive transmembrane segments (helical) span residues W81 to V113 and L128 to I150. The Selectivity filter part_1 motif lies at G156–P160. S157 serves as a coordination point for chloride. The helical intramembrane region spans I159–L166. The next 2 membrane-spanning stretches (helical) occupy residues R176 to G194 and E200 to F217. A Selectivity filter part_2 motif is present at residues G198–P202. 2 intramembrane regions (helical) span residues F241–A253 and P257–L265. The next 3 membrane-spanning stretches (helical) occupy residues T277–F294, G335–R364, and K371–A392. N410, N423, and N433 each carry an N-linked (GlcNAc...) asparagine glycan. 2 helical membrane passes run P463 to G482 and G488 to I512. The Selectivity filter part_3 motif lies at G488–P492. F490 contributes to the chloride binding site. Positions G520–V534 form an intramembrane region, helical. The segment at residues V535 to M537 is an intramembrane region (note=Loop between two helices). The helical intramembrane region spans T538–T549. The segment at residues N550–T553 is an intramembrane region (note=Loop between two helices). The helical transmembrane segment at Y554–F572 threads the bilayer. Over N573–L870 the chain is Cytoplasmic. Y577 contacts chloride. A CBS 1 domain is found at M606–S663. H631–A633 is a binding site for ATP. Position 774 is a phosphoserine (S774). The CBS 2 domain maps to M808–T869. T850–N853 contributes to the ATP binding site.

Belongs to the chloride channel (TC 2.A.49) family. ClC-6/CLCN6 subfamily. In terms of processing, N-glycosylated on several asparagine residues. Detected in whole brain and in hippocampus neurons (at protein level). Detected in brain, trigeminus, dorsal root ganglion, spinal cord, eye, kidney, testis, skeletal muscle, thymus and pancreas. Isoform ClC-6c is expressed only in kidney.

It is found in the late endosome membrane. It carries out the reaction 2 chloride(in) + H(+)(out) = 2 chloride(out) + H(+)(in). In terms of biological role, voltage-gated channel mediating the exchange of chloride ions against protons. Functions as antiporter and contributes to the acidification of the late endosome lumen. The CLC channel family contains both chloride channels and proton-coupled anion transporters that exchange chloride or another anion for protons. The presence of conserved gating glutamate residues is typical for family members that function as antiporters. The chain is H(+)/Cl(-) exchange transporter 6 from Mus musculus (Mouse).